A 328-amino-acid polypeptide reads, in one-letter code: Tetraacyldisaccharide 4'-kinase (328 aa).

An ATP-binding site is contributed by 55-62 (TAGGNGKT).

The protein belongs to the LpxK family.

The enzyme catalyses a lipid A disaccharide + ATP = a lipid IVA + ADP + H(+). The protein operates within glycolipid biosynthesis; lipid IV(A) biosynthesis; lipid IV(A) from (3R)-3-hydroxytetradecanoyl-[acyl-carrier-protein] and UDP-N-acetyl-alpha-D-glucosamine: step 6/6. Transfers the gamma-phosphate of ATP to the 4'-position of a tetraacyldisaccharide 1-phosphate intermediate (termed DS-1-P) to form tetraacyldisaccharide 1,4'-bis-phosphate (lipid IVA). The sequence is that of Tetraacyldisaccharide 4'-kinase from Shigella flexneri serotype 5b (strain 8401).